The chain runs to 139 residues: Large ribosomal subunit protein uL13 (139 aa).

It belongs to the universal ribosomal protein uL13 family. Part of the 50S ribosomal subunit.

This protein is one of the early assembly proteins of the 50S ribosomal subunit, although it is not seen to bind rRNA by itself. It is important during the early stages of 50S assembly. The protein is Large ribosomal subunit protein uL13 of Aliarcobacter butzleri (strain RM4018) (Arcobacter butzleri).